Here is a 143-residue protein sequence, read N- to C-terminus: MAKKIIGYIKLQVPAGKANPSPPIGPALGQRGLNIMEFCKAFNAQTQGVEPGLPIPVVITAFADKSFTFVMKTPPATILIKKAAGIKSGSAKPHTDKVGKITRAQCEEIAKTKSPDLTAADMEAAIRTIAGSARSMGITVEGL.

Belongs to the universal ribosomal protein uL11 family. As to quaternary structure, part of the ribosomal stalk of the 50S ribosomal subunit. Interacts with L10 and the large rRNA to form the base of the stalk. L10 forms an elongated spine to which L12 dimers bind in a sequential fashion forming a multimeric L10(L12)X complex. One or more lysine residues are methylated.

Forms part of the ribosomal stalk which helps the ribosome interact with GTP-bound translation factors. The sequence is that of Large ribosomal subunit protein uL11 from Dechloromonas aromatica (strain RCB).